A 341-amino-acid polypeptide reads, in one-letter code: Tyrosine recombinase XerC (341 aa).

The Core-binding (CB) domain occupies 14 to 105 (PDAAEALERW…GVRSFFRWAD (92 aa)). The Tyr recombinase domain occupies 126–309 (PLPRPLAADD…DAEHLLSVYE (184 aa)). Residues arginine 169, lysine 193, histidine 261, arginine 264, and histidine 287 contribute to the active site. The active-site O-(3'-phospho-DNA)-tyrosine intermediate is tyrosine 296.

It belongs to the 'phage' integrase family. XerC subfamily. Forms a cyclic heterotetrameric complex composed of two molecules of XerC and two molecules of XerD.

It localises to the cytoplasm. Its function is as follows. Site-specific tyrosine recombinase, which acts by catalyzing the cutting and rejoining of the recombining DNA molecules. The XerC-XerD complex is essential to convert dimers of the bacterial chromosome into monomers to permit their segregation at cell division. It also contributes to the segregational stability of plasmids. The chain is Tyrosine recombinase XerC from Rhodospirillum centenum (strain ATCC 51521 / SW).